The chain runs to 783 residues: Ras and Rab interactor 1 (783 aa).

Residue Met-1 is modified to N-acetylmethionine. The disordered stretch occupies residues 1–53 (MESPGESGAGSPGAPSPSSFTTGHLAREKPAQDPLYDVPNASGGQAGGPQRPG). Phosphoserine is present on residues Ser-3 and Ser-16. Tyr-36 is subject to Phosphotyrosine; by ABL1 and ABL2. The SH2 domain occupies 69-163 (WLQLQANAAA…ILLLPLQLPR (95 aa)). Residues Ser-210, Ser-258, Ser-333, and Ser-337 each carry the phosphoserine modification. 2 disordered regions span residues 250-282 (STET…ERLP) and 295-342 (YRVP…HLGR). Residues 257 to 269 (LSPPAVPPPPVPV) show a composition bias toward pro residues. Positions 294 to 727 (GYRVPAGSGP…GSGQSEARSR (434 aa)) are ras and 14-3-3 protein binding region. Over residues 317 to 334 (GSPSSSEEEGVPGSRGSP) the composition is skewed to low complexity. Residue Ser-351 is modified to Phosphoserine; by PKD/PRKD1. In terms of domain architecture, VPS9 spans 456 to 598 (LAADGSLGRL…LSGLGQAHTL (143 aa)). Phosphoserine is present on residues Ser-609 and Ser-611. Residues 624 to 706 (FQHLLRVAYQ…GYLVYRRAEW (83 aa)) form the Ras-associating domain. Residue Arg-692 is modified to Omega-N-methylarginine. Residues 709–783 (TQGAVTEEEG…EAEGSRAAEE (75 aa)) form a disordered region. Positions 762-772 (QAQEGPAQPGE) are enriched in low complexity.

This sequence belongs to the RIN (Ras interaction/interference) family. As to quaternary structure, interacts with the GTP-bound form of Ras proteins (NRAS, HRAS and KRAS). This interaction prevents the association between RAF1 and Ras. Interacts with 14-3-3 proteins YWHAB, YWHAE and YWHAZ when phosphorylated on Ser-351. Interacts with the SH3 domain of ABL1 and ABL2. Interacts with RAB5A. The interaction with Ras is probably regulated and antagonized by the interaction with 14-3-3 proteins. The interaction with 14-3-3 proteins is regulated by phosphorylation on Ser-351. In terms of processing, phosphorylated on tyrosine residues by ABL1 and ABL2. Phosphorylation at Ser-351 by PRKD1 induces interaction with 14-3-3 proteins. As to expression, expressed in all tissues examined with high levels in brain, placenta and pancreas.

The protein resides in the cytoplasm. It localises to the membrane. Its subcellular location is the cytoskeleton. Ras effector protein, which may serve as an inhibitory modulator of neuronal plasticity in aversive memory formation. Can affect Ras signaling at different levels. First, by competing with RAF1 protein for binding to activated Ras. Second, by enhancing signaling from ABL1 and ABL2, which regulate cytoskeletal remodeling. Third, by activating RAB5A, possibly by functioning as a guanine nucleotide exchange factor (GEF) for RAB5A, by exchanging bound GDP for free GTP, and facilitating Ras-activated receptor endocytosis. This chain is Ras and Rab interactor 1 (RIN1), found in Homo sapiens (Human).